A 392-amino-acid chain; its full sequence is Galactokinase (392 aa).

37-40 is a binding site for substrate; that stretch reads EHTD. ATP contacts are provided by residues Ser-71 and 128-134; that span reads GAGLSSS. Ser-134 and Glu-166 together coordinate Mg(2+). Residue Asp-178 is the Proton acceptor of the active site. Tyr-228 is a binding site for substrate.

This sequence belongs to the GHMP kinase family. GalK subfamily.

It localises to the cytoplasm. It carries out the reaction alpha-D-galactose + ATP = alpha-D-galactose 1-phosphate + ADP + H(+). It participates in carbohydrate metabolism; galactose metabolism. Catalyzes the transfer of the gamma-phosphate of ATP to D-galactose to form alpha-D-galactose-1-phosphate (Gal-1-P). In Streptococcus pneumoniae serotype 4 (strain ATCC BAA-334 / TIGR4), this protein is Galactokinase.